The chain runs to 215 residues: Heart- and neural crest derivatives-expressed protein 1 (215 aa).

Disordered stretches follow at residues 53–109 and 169–202; these read APDF…RTES and VDGG…KGRT. The span at 65–75 shows a compositional bias: low complexity; the sequence is AAAAAATYGPD. Residues 92–104 are compositionally biased toward basic residues; it reads LGRRKGSGPKKER. The bHLH domain maps to 94-146; the sequence is RRKGSGPKKERRRTESINSAFAELRECIPNVPADTKLSKIKTLRLATSYIAYL. The residue at position 107 (threonine 107) is a Phosphothreonine; by PLK4. At serine 109 the chain carries Phosphoserine; by PLK4.

Efficient DNA binding requires dimerization with another bHLH protein. Forms homodimers and heterodimers with TCF3 gene products E12 and E47, HAND2 and HEY1, HEY2 and HEYL (hairy-related transcription factors). Interacts with MDFIC. Interacts with SOX15; the interaction enhances HAND1-induced differentiation of trophoblast giant cells. Phosphorylation by PLK4 disrupts the interaction with MDFIC and leads to translocation into the nucleoplasm, allowing dimerization and transcription factor activity.

Its subcellular location is the nucleus. It is found in the nucleoplasm. The protein resides in the nucleolus. Functionally, transcription factor that plays an essential role in both trophoblast giant cell differentiation and in cardiac morphogenesis. Binds the DNA sequence 5'-NRTCTG-3' (non-canonical E-box). Acts as a transcriptional repressor of SOX15. In the adult, could be required for ongoing expression of cardiac-specific genes. This chain is Heart- and neural crest derivatives-expressed protein 1 (HAND1), found in Oryctolagus cuniculus (Rabbit).